A 71-amino-acid polypeptide reads, in one-letter code: uncharacterized protein (71 aa).

The helical transmembrane segment at 5-22 (VVMCSGLFCSVFAGAFML) threads the bilayer.

The protein localises to the membrane. This is an uncharacterized protein from Bacillus subtilis (strain 168).